Consider the following 434-residue polypeptide: Isocitrate lyase (434 aa).

Serine 91 to tryptophan 93 lines the substrate pocket. Residue aspartate 157 coordinates Mg(2+). The active-site Proton acceptor is the cysteine 195. Residues glycine 196–histidine 197, arginine 232, asparagine 317–serine 321, and threonine 351 contribute to the substrate site.

The protein belongs to the isocitrate lyase/PEP mutase superfamily. Isocitrate lyase family. In terms of assembly, homotetramer. Requires Mg(2+) as cofactor.

The enzyme catalyses D-threo-isocitrate = glyoxylate + succinate. It functions in the pathway carbohydrate metabolism; glyoxylate cycle; (S)-malate from isocitrate: step 1/2. Involved in the metabolic adaptation in response to environmental changes. Catalyzes the reversible formation of succinate and glyoxylate from isocitrate, a key step of the glyoxylate cycle, which operates as an anaplerotic route for replenishing the tricarboxylic acid cycle during growth on fatty acid substrates. This Escherichia coli O6:H1 (strain CFT073 / ATCC 700928 / UPEC) protein is Isocitrate lyase (aceA).